The sequence spans 299 residues: Glycine--tRNA ligase alpha subunit (299 aa).

Belongs to the class-II aminoacyl-tRNA synthetase family. Tetramer of two alpha and two beta subunits.

Its subcellular location is the cytoplasm. The enzyme catalyses tRNA(Gly) + glycine + ATP = glycyl-tRNA(Gly) + AMP + diphosphate. The chain is Glycine--tRNA ligase alpha subunit from Dictyoglomus turgidum (strain DSM 6724 / Z-1310).